Consider the following 445-residue polypeptide: Phosphoglucosamine mutase (445 aa).

The active-site Phosphoserine intermediate is the serine 102. Mg(2+)-binding residues include serine 102, aspartate 241, aspartate 243, and aspartate 245. Serine 102 bears the Phosphoserine mark.

Belongs to the phosphohexose mutase family. Mg(2+) serves as cofactor. Activated by phosphorylation.

It carries out the reaction alpha-D-glucosamine 1-phosphate = D-glucosamine 6-phosphate. Catalyzes the conversion of glucosamine-6-phosphate to glucosamine-1-phosphate. The polypeptide is Phosphoglucosamine mutase (Escherichia coli (strain 55989 / EAEC)).